Consider the following 320-residue polypeptide: MQNKENREPRVQQTPSAGVGPLRVEMNPDTHAVSGPGRVPVKSNSKVLSIDDFDIGRPLGKGKFGNVYLARERKLKVVIALKVLFKSQMVKEGVEHQLRREIEIQSHLRHPNILRFYNYFHDDTRVFLILEYAPRGEMYKELQRYGRFDDQRTATYMEEVSDALQYCHEKKVIHRDIKPENLLLGYRGELKIADFGWSVHAPSLRRRTMCGTLDYLPPEMIEGHSHDEKVDLWSIGVLCYECLVGNPPFETASHAETYKRITKVDLQFPKLVSEGARDLISKLLRHSPSMRLPLRSVMEHPWVKANSRRVLPPVCSSEPH.

The segment covering 1-10 (MQNKENREPR) has biased composition (basic and acidic residues). Positions 1-38 (MQNKENREPRVQQTPSAGVGPLRVEMNPDTHAVSGPGR) are disordered. A Protein kinase domain is found at 53–303 (FDIGRPLGKG…LRSVMEHPWV (251 aa)). ATP-binding positions include 59-67 (LGKGKFGNV) and lysine 82. The active-site Proton acceptor is aspartate 176.

The protein belongs to the protein kinase superfamily. Ser/Thr protein kinase family. Aurora subfamily. In terms of assembly, component of the chromosomal passenger complex (CPC).

The protein resides in the nucleus. Its subcellular location is the chromosome. It is found in the centromere. The protein localises to the cytoplasm. It localises to the cytoskeleton. The protein resides in the spindle. Its subcellular location is the midbody. The enzyme catalyses L-seryl-[protein] + ATP = O-phospho-L-seryl-[protein] + ADP + H(+). It catalyses the reaction L-threonyl-[protein] + ATP = O-phospho-L-threonyl-[protein] + ADP + H(+). Its activity is regulated as follows. Kinase activity is stimulated by cell-cycle specific phosphorylation. Functionally, serine/threonine-protein kinase component of the chromosomal passenger complex (CPC), a complex that acts as a key regulator of mitosis. The CPC complex has essential functions at the centromere in ensuring correct chromosome alignment and segregation and is required for chromatin-induced microtubule stabilization and spindle assembly. Involved in the bipolar attachment of spindle microtubules to kinetochores and is a key regulator for the onset of cytokinesis during mitosis. Required for central/midzone spindle assembly and cleavage furrow formation. Key component of the cytokinesis checkpoint, a process required to delay abscission to prevent both premature resolution of intercellular chromosome bridges and accumulation of DNA damage. Phosphorylates 'Ser-10' of histone H3 during mitosis. The sequence is that of Aurora kinase B (aurkb) from Danio rerio (Zebrafish).